We begin with the raw amino-acid sequence, 912 residues long: Type II beta methyltransferase M.BslI (912 aa).

Belongs to the N(4)/N(6)-methyltransferase family. N(4) subfamily.

It carries out the reaction a 2'-deoxycytidine in DNA + S-adenosyl-L-methionine = an N(4)-methyl-2'-deoxycytidine in DNA + S-adenosyl-L-homocysteine + H(+). Functionally, a beta subtype methylase. Recognizes the double-stranded sequence 5'-CCN(7)GG-3', methylates C-2 on both strands, and protects the DNA from cleavage by the BslI endonuclease. The polypeptide is Type II beta methyltransferase M.BslI (bslIM) (Bacillus sp. (strain NEB-606)).